The following is an 84-amino-acid chain: Transmembrane protein EP84R (84 aa).

Helical transmembrane passes span 31 to 51 (VIGV…IIIL) and 60 to 80 (AASI…FLIY).

It belongs to the asfivirus EP84R family.

It is found in the virion membrane. This is Transmembrane protein EP84R from Ornithodoros (relapsing fever ticks).